The following is a 371-amino-acid chain: Putative glutamate--cysteine ligase 2 (371 aa).

Belongs to the glutamate--cysteine ligase type 2 family. YbdK subfamily.

The catalysed reaction is L-cysteine + L-glutamate + ATP = gamma-L-glutamyl-L-cysteine + ADP + phosphate + H(+). Functionally, ATP-dependent carboxylate-amine ligase which exhibits weak glutamate--cysteine ligase activity. The polypeptide is Putative glutamate--cysteine ligase 2 (Burkholderia multivorans (strain ATCC 17616 / 249)).